The following is a 117-amino-acid chain: Eukaryotic translation initiation factor 4E-binding protein 1 (117 aa).

2 stretches are compositionally biased toward polar residues: residues 1–12 (MSAGSSCSQTPS) and 33–47 (YSTT…TTPG). Residues 1-47 (MSAGSSCSQTPSRAIPTRRVALGDGVQLPPGDYSTTPGGTLFSTTPG) are disordered. At Ser-2 the chain carries N-acetylserine. A phosphothreonine mark is found at Thr-36 and Thr-40. Ser-43 is subject to Phosphoserine. Thr-45 bears the Phosphothreonine; by MTOR mark. Thr-49 carries the phosphothreonine modification. Phosphotyrosine is present on Tyr-53. The YXXXXLphi motif motif lies at 53 to 59 (YDRKFLM). Residue Lys-56 forms a Glycyl lysine isopeptide (Lys-Gly) (interchain with G-Cter in ubiquitin) linkage. A Phosphoserine; by DYRK2, MAPK1, MAPK3 and MTOR modification is found at Ser-64. Positions 64–117 (SPVAKTPPKDLPTIPGVTSPTSDEPPMQASQSHLHSSPEDKRAGGEESQFEMDI) are disordered. Position 69 is a phosphothreonine; by MTOR (Thr-69). Phosphothreonine is present on Thr-76. Positions 79-98 (GVTSPTSDEPPMQASQSHLH) are enriched in polar residues. Phosphoserine is present on residues Ser-82, Ser-95, and Ser-99. The segment covering 99–108 (SSPEDKRAGG) has biased composition (basic and acidic residues). Ser-100 bears the Phosphoserine; by DYRK2 mark. Ser-111 is modified (phosphoserine). The short motif at 113–117 (FEMDI) is the TOS motif element.

Belongs to the eIF4E-binding protein family. In terms of assembly, hypophosphorylated EIF4EBP1 competes with EIF4G1/EIF4G3 to interact with EIF4E; insulin stimulated MAP-kinase (MAPK1 and MAPK3) or mTORC1 phosphorylation of EIF4EBP1 causes dissociation of the complex allowing EIF4G1/EIF4G3 to bind and consequent initiation of translation. Interacts (via TOS motif) with RPTOR; promoting phosphorylation by mTORC1. In terms of processing, phosphorylated on serine and threonine residues in response to insulin, EGF and PDGF. Phosphorylation at Thr-36, Thr-45, Ser-64 and Thr-69, corresponding to the hyperphosphorylated form, is regulated by mTORC1 and abolishes binding to EIF4E. Ubiquitinated: when eIF4E levels are low, hypophosphorylated form is ubiquitinated by the BCR(KLHL25) complex, leading to its degradation and serving as a homeostatic mechanism to maintain translation and prevent eIF4E inhibition when eIF4E levels are low. Not ubiquitinated when hyperphosphorylated (at Thr-36, Thr-45, Ser-64 and Thr-69) or associated with eIF4E. As to expression, expressed in all tissues examined; highest levels in fat and skeletal tissue, lowest levels in kidney.

It is found in the cytoplasm. It localises to the nucleus. Functionally, repressor of translation initiation that regulates EIF4E activity by preventing its assembly into the eIF4F complex: hypophosphorylated form competes with EIF4G1/EIF4G3 and strongly binds to EIF4E, leading to repress translation. In contrast, hyperphosphorylated form dissociates from EIF4E, allowing interaction between EIF4G1/EIF4G3 and EIF4E, leading to initiation of translation. Mediates the regulation of protein translation by hormones, growth factors and other stimuli that signal through the MAP kinase and mTORC1 pathways. In Rattus norvegicus (Rat), this protein is Eukaryotic translation initiation factor 4E-binding protein 1 (Eif4ebp1).